A 144-amino-acid chain; its full sequence is Deoxyuridine 5'-triphosphate nucleotidohydrolase (144 aa).

Residues 63–65 (RSG), Asn-76, 80–82 (TID), and Lys-90 contribute to the substrate site.

Belongs to the dUTPase family. It depends on Mg(2+) as a cofactor.

The enzyme catalyses dUTP + H2O = dUMP + diphosphate + H(+). Its pathway is pyrimidine metabolism; dUMP biosynthesis; dUMP from dCTP (dUTP route): step 2/2. Its function is as follows. This enzyme is involved in nucleotide metabolism: it produces dUMP, the immediate precursor of thymidine nucleotides and it decreases the intracellular concentration of dUTP so that uracil cannot be incorporated into DNA. This chain is Deoxyuridine 5'-triphosphate nucleotidohydrolase, found in Hydrogenobaculum sp. (strain Y04AAS1).